An 806-amino-acid chain; its full sequence is Fibroblast growth factor receptor 3 (806 aa).

An N-terminal signal peptide occupies residues 1-19; it reads MRAAWGSVWCLCLAAAVGA. At 20–364 the chain is on the extracellular side; sequence LPAARRRGAE…ELMEMDDSGS (345 aa). The Ig-like C2-type 1 domain maps to 24–124; that stretch reads RRRGAERSGG…VLGNFTVRVT (101 aa). Cys-61 and Cys-107 are oxidised to a cystine. N-linked (GlcNAc...) asparagine glycans are attached at residues Asn-83, Asn-96, and Asn-118. Residues 121–146 are disordered; sequence VRVTDSPSSGDDEDDDDESEDTGVPF. Positions 130–141 are enriched in acidic residues; sequence GDDEDDDDESED. Ig-like C2-type domains follow at residues 150–238 and 247–349; these read PDKM…YQLD and PILQ…AWLT. Residues Cys-170 and Cys-222 are joined by a disulfide bond. N-linked (GlcNAc...) asparagine glycosylation is found at Asn-219, Asn-256, Asn-288, Asn-309, and Asn-322. The cysteines at positions 269 and 333 are disulfide-linked. Residues 365 to 389 form a helical membrane-spanning segment; that stretch reads VYAGILSYGTGLVLFILVLVIVIIC. Residues 390–806 are Cytoplasmic-facing; that stretch reads RMKMPNKKAM…HVPCNGVIRT (417 aa). Residues 466–755 form the Protein kinase domain; it reads LTLGKPLGEG…LTMTSTDEYL (290 aa). ATP is bound by residues 472–480 and Lys-502; that span reads LGEGCFGQV. Residue Asp-611 is the Proton acceptor of the active site. Phosphotyrosine; by autocatalysis is present on residues Tyr-641, Tyr-642, Tyr-718, and Tyr-754.

This sequence belongs to the protein kinase superfamily. Tyr protein kinase family. Fibroblast growth factor receptor subfamily. In terms of assembly, monomer. Homodimer after ligand binding. In terms of processing, autophosphorylated. Binding of FGF family members together with heparan sulfate proteoglycan or heparin promotes receptor dimerization and autophosphorylation on tyrosine residues. Autophosphorylation occurs in trans between the two FGFR molecules present in the dimer.

The protein localises to the cell membrane. It catalyses the reaction L-tyrosyl-[protein] + ATP = O-phospho-L-tyrosyl-[protein] + ADP + H(+). Present in an inactive conformation in the absence of bound ligand. Ligand binding leads to dimerization and activation by autophosphorylation on tyrosine residues. In terms of biological role, tyrosine-protein kinase that acts as a cell-surface receptor for fibroblast growth factors and plays an essential role in the regulation of cell proliferation, differentiation and apoptosis. Plays an essential role in the regulation of chondrocyte differentiation, proliferation and apoptosis, and is required for normal skeleton development. Regulates both osteogenesis and postnatal bone mineralization by osteoblasts. Promotes apoptosis in chondrocytes, but can also promote cancer cell proliferation. Phosphorylates PLCG1, CBL and FRS2. Ligand binding leads to the activation of several signaling cascades. Activation of PLCG1 leads to the production of the cellular signaling molecules diacylglycerol and inositol 1,4,5-trisphosphate. Phosphorylation of FRS2 triggers recruitment of GRB2, GAB1, PIK3R1 and SOS1, and mediates activation of RAS, MAPK1/ERK2, MAPK3/ERK1 and the MAP kinase signaling pathway, as well as of the AKT1 signaling pathway. This Gallus gallus (Chicken) protein is Fibroblast growth factor receptor 3 (FGFR3).